The primary structure comprises 130 residues: Small ribosomal subunit protein uS11 (130 aa).

It belongs to the universal ribosomal protein uS11 family. In terms of assembly, part of the 30S ribosomal subunit. Interacts with proteins S7 and S18. Binds to IF-3.

Located on the platform of the 30S subunit, it bridges several disparate RNA helices of the 16S rRNA. Forms part of the Shine-Dalgarno cleft in the 70S ribosome. The polypeptide is Small ribosomal subunit protein uS11 (Shewanella denitrificans (strain OS217 / ATCC BAA-1090 / DSM 15013)).